The sequence spans 513 residues: uncharacterized protein (513 aa).

One can recognise a CYTH domain in the interval His-11–Thr-219. The CHAD domain occupies Pro-228–Lys-506.

This is an uncharacterized protein from Mycobacterium tuberculosis (strain CDC 1551 / Oshkosh).